Here is a 1427-residue protein sequence, read N- to C-terminus: Double-stranded DNA deaminase toxin A (1427 aa).

2 consecutive transmembrane segments (helical) span residues A16–F36 and F43–I63. YD repeat units lie at residues R469–T501, Y548–G584, N720–R747, and Y977–A1008. A C-terminal effector domain, has cytidine deaminase activity region spans residues I1264–C1427. Zn(2+) contacts are provided by H1345, C1373, and C1376. Residues K1402–C1427 form a disordered region. A compositionally biased stretch (polar residues) spans F1412–S1421.

Belongs to the RHS/WapA nuclease family. In terms of assembly, the toxic domain forms a 1:1 complex with the DddI immunity protein.

The protein localises to the membrane. It carries out the reaction a 2'-deoxycytidine in double-stranded DNA + H2O + H(+) = a 2'-deoxyuridine in double-stranded DNA + NH4(+). Functionally, toxic component of a toxin-immunity protein module, which functions as a cellular contact-dependent growth inhibition (CDI) system. CDI modules allow bacteria to communicate with and inhibit the growth of closely related neighboring bacteria in a contact-dependent fashion. Bacteria that have this module inhibit or kill bacteria without it, giving them a growth advantage. Probably specifically inhibited by cognate immunity protein DddI. The C-terminal 163 residue fragment has double-stranded DNA cytidine deaminase activity; it does not deaminate ssDNA, ssRNA or dsRNA. Leads to C:G to T:A conversions in deaminated DNA. Preferentially deaminates 5'-TC-3' substrates. This is Double-stranded DNA deaminase toxin A from Burkholderia cenocepacia (strain H111).